We begin with the raw amino-acid sequence, 489 residues long: Zinc finger protein 772 (489 aa).

Residues 27–98 form the KRAB domain; the sequence is VNFEDVFVYF…DWVDMTLAVA (72 aa). C2H2-type zinc fingers lie at residues 144-166, 172-194, 266-288, 294-316, 322-344, 350-372, 378-400, 406-428, 434-456, and 462-484; these read YPCGTCGLVLKDILHLAEHQETH, YMCVLCGKQFCFSANLHQHQKQH, YKCSECGKTFSRKDSLVQHQRVH, YECGECGKTFSRKPILAQHQRIH, YECGICGKVFNHSSNLIVHQRVH, YKCSECGKAYSHKSTLVQHESIH, YECSECGKYFGHKYRLIKHWSVH, YECIACGKFFSQSSDLIAHQRVH, YVCSECGKAFSHKHVLVQHHRIH, and YKCSECGKAFRQRASLIRHWKIH.

This sequence belongs to the krueppel C2H2-type zinc-finger protein family.

The protein localises to the nucleus. Its function is as follows. May be involved in transcriptional regulation. The protein is Zinc finger protein 772 (ZNF772) of Homo sapiens (Human).